Consider the following 421-residue polypeptide: Zinc finger protein 584 (421 aa).

Residues 17-88 (VMFEDVTVYF…SWVDVTPVSR (72 aa)) form the KRAB domain. The segment covering 120-129 (QHQDTHSEGK) has biased composition (basic and acidic residues). The disordered stretch occupies residues 120–146 (QHQDTHSEGKPRRHTEHGAAFPPGSSC). 8 consecutive C2H2-type zinc fingers follow at residues 159 to 181 (FKCS…LITH), 214 to 236 (HVCN…QKVH), 242 to 264 (FKCS…QRIH), 270 to 292 (YECS…RKVH), 298 to 320 (YECT…QRVH), 326 to 348 (FECK…WKVH), 354 to 376 (YECS…QQFH), and 382 to 404 (YECT…KKVH). Residues 402-421 (KVHTPERRQEDRAHGKVVSC) form a disordered region. Residues 404-415 (HTPERRQEDRAH) are compositionally biased toward basic and acidic residues.

Belongs to the krueppel C2H2-type zinc-finger protein family.

It is found in the nucleus. Functionally, may be involved in transcriptional regulation. The chain is Zinc finger protein 584 (ZNF584) from Homo sapiens (Human).